Here is a 439-residue protein sequence, read N- to C-terminus: MNKKFYITTLGCPKNTADSMSMHHSLLEEGFTPATFAEESDFHFINTCTFIQSATEETIQTILSAAQVKKQNHQKLVVVGCFAERYPDNISSEIPEVDLFFGTGRYAQAGKILREKFPDLSPPKREFNDSLLEKLKLSSEIENYSKPYAYVKVSDGCNRGCSFCIIPSFRGKFRESPVEDILRDVDRAIRAGAKEICLVSQDTVYYGRNSEVLLDMVRKVAEIDSLEVLRLLYLYPDKKTEKLLRLMGETPKIAPYLESPLQHVSSKILKSMNRVGESSTFKDLFALAREVKPGLEIRTSFIIGYPGEEPGDVDQVLRFIEETRPEKVNLFSYSPQEGTKGAELKQTVSEKEKSRRINLIRDVHLAILEEIHESRIGQTYDAIVDSVENDQAVVRRFQDAPEMDEVVYVDDISLIPGMIGKIRIDSFYEYDMNGTWISK.

In terms of domain architecture, MTTase N-terminal spans 3 to 118 (KKFYITTLGC…AGKILREKFP (116 aa)). Residues cysteine 12, cysteine 48, cysteine 81, cysteine 157, cysteine 161, and cysteine 164 each coordinate [4Fe-4S] cluster. The region spanning 143-370 (NYSKPYAYVK…RDVHLAILEE (228 aa)) is the Radical SAM core domain. Residues 373 to 438 (ESRIGQTYDA…EYDMNGTWIS (66 aa)) enclose the TRAM domain.

Belongs to the methylthiotransferase family. RimO subfamily. Requires [4Fe-4S] cluster as cofactor.

It is found in the cytoplasm. The catalysed reaction is L-aspartate(89)-[ribosomal protein uS12]-hydrogen + (sulfur carrier)-SH + AH2 + 2 S-adenosyl-L-methionine = 3-methylsulfanyl-L-aspartate(89)-[ribosomal protein uS12]-hydrogen + (sulfur carrier)-H + 5'-deoxyadenosine + L-methionine + A + S-adenosyl-L-homocysteine + 2 H(+). Catalyzes the methylthiolation of an aspartic acid residue of ribosomal protein uS12. This is Ribosomal protein uS12 methylthiotransferase RimO from Leptospira borgpetersenii serovar Hardjo-bovis (strain JB197).